The primary structure comprises 180 residues: ATP-dependent protease subunit HslV (180 aa).

The active site involves threonine 8. 3 residues coordinate Na(+): glycine 165, cysteine 168, and threonine 171.

It belongs to the peptidase T1B family. HslV subfamily. A double ring-shaped homohexamer of HslV is capped on each side by a ring-shaped HslU homohexamer. The assembly of the HslU/HslV complex is dependent on binding of ATP.

Its subcellular location is the cytoplasm. It carries out the reaction ATP-dependent cleavage of peptide bonds with broad specificity.. With respect to regulation, allosterically activated by HslU binding. In terms of biological role, protease subunit of a proteasome-like degradation complex believed to be a general protein degrading machinery. This Halalkalibacterium halodurans (strain ATCC BAA-125 / DSM 18197 / FERM 7344 / JCM 9153 / C-125) (Bacillus halodurans) protein is ATP-dependent protease subunit HslV.